A 214-amino-acid polypeptide reads, in one-letter code: Thymidylate kinase (214 aa).

10 to 17 (GPDGAGKT) lines the ATP pocket.

Belongs to the thymidylate kinase family.

The enzyme catalyses dTMP + ATP = dTDP + ADP. Its function is as follows. Phosphorylation of dTMP to form dTDP in both de novo and salvage pathways of dTTP synthesis. This Latilactobacillus sakei subsp. sakei (strain 23K) (Lactobacillus sakei subsp. sakei) protein is Thymidylate kinase.